The sequence spans 122 residues: Large ribosomal subunit protein bL12 (122 aa).

The protein belongs to the bacterial ribosomal protein bL12 family. In terms of assembly, homodimer. Part of the ribosomal stalk of the 50S ribosomal subunit. Forms a multimeric L10(L12)X complex, where L10 forms an elongated spine to which 2 to 4 L12 dimers bind in a sequential fashion. Binds GTP-bound translation factors.

Its function is as follows. Forms part of the ribosomal stalk which helps the ribosome interact with GTP-bound translation factors. Is thus essential for accurate translation. This Stenotrophomonas maltophilia (strain K279a) protein is Large ribosomal subunit protein bL12.